The following is a 144-amino-acid chain: Large ribosomal subunit protein uL13 (144 aa).

It belongs to the universal ribosomal protein uL13 family. Part of the 50S ribosomal subunit.

Functionally, this protein is one of the early assembly proteins of the 50S ribosomal subunit, although it is not seen to bind rRNA by itself. It is important during the early stages of 50S assembly. This chain is Large ribosomal subunit protein uL13, found in Blochmanniella pennsylvanica (strain BPEN).